The chain runs to 172 residues: Adenylate kinase isoenzyme 6 (172 aa).

ATP contacts are provided by G13, G15, K16, T17, and T18. The segment at 33–56 (NVGDLAREGHLYDGYDEEYGCPIL) is NMPbind. An LID region spans residues 108–118 (TRGYHEKKLQD). ATP is bound at residue R109.

This sequence belongs to the adenylate kinase family. AK6 subfamily. Monomer and homodimer. Interacts with small ribosomal subunit protein uS11. Not a structural component of 43S pre-ribosomes, but transiently interacts with them by binding to uS11. Interacts with COIL (via C-terminus).

It is found in the cytoplasm. The protein resides in the nucleus. The protein localises to the nucleoplasm. It localises to the cajal body. It catalyses the reaction AMP + ATP = 2 ADP. The catalysed reaction is ATP + H2O = ADP + phosphate + H(+). Its function is as follows. Broad-specificity nucleoside monophosphate (NMP) kinase that catalyzes the reversible transfer of the terminal phosphate group between nucleoside triphosphates and monophosphates. Also has ATPase activity. Involved in the late cytoplasmic maturation steps of the 40S ribosomal particles, specifically 18S rRNA maturation. While NMP activity is not required for ribosome maturation, ATPase activity is. Associates transiently with small ribosomal subunit protein uS11. ATP hydrolysis breaks the interaction with uS11. May temporarily remove uS11 from the ribosome to enable a conformational change of the ribosomal RNA that is needed for the final maturation step of the small ribosomal subunit. Its NMP activity may have a role in nuclear energy homeostasis. May be involved in regulation of Cajal body (CB) formation. The protein is Adenylate kinase isoenzyme 6 of Rattus norvegicus (Rat).